A 311-amino-acid chain; its full sequence is Formimidoylglutamase (311 aa).

The Mn(2+) site is built by His-122, Asp-151, His-153, Asp-155, Cys-242, and Asp-244.

Belongs to the arginase family. As to quaternary structure, homodimer. Mn(2+) is required as a cofactor.

The enzyme catalyses N-formimidoyl-L-glutamate + H2O = formamide + L-glutamate. Its pathway is amino-acid degradation; L-histidine degradation into L-glutamate; L-glutamate from N-formimidoyl-L-glutamate (hydrolase route): step 1/1. Functionally, catalyzes the conversion of N-formimidoyl-L-glutamate to L-glutamate and formamide. The chain is Formimidoylglutamase from Pseudomonas aeruginosa (strain ATCC 15692 / DSM 22644 / CIP 104116 / JCM 14847 / LMG 12228 / 1C / PRS 101 / PAO1).